Here is a 172-residue protein sequence, read N- to C-terminus: Cytochrome b6-f complex iron-sulfur subunit (172 aa).

The chain crosses the membrane as a helical span at residues 17–39 (VFLNALLSSSVGVVVVGTLYPVV). The Rieske domain maps to 61–161 (GKPISVSELL…ATVDGDNVRF (101 aa)). Positions 107, 109, 125, and 128 each coordinate [2Fe-2S] cluster. Residues C112 and C127 are joined by a disulfide bond.

Belongs to the Rieske iron-sulfur protein family. As to quaternary structure, the 4 large subunits of the cytochrome b6-f complex are cytochrome b6, subunit IV (17 kDa polypeptide, PetD), cytochrome f and the Rieske protein, while the 4 small subunits are PetG, PetL, PetM and PetN. The complex functions as a dimer. Requires [2Fe-2S] cluster as cofactor.

Its subcellular location is the cellular thylakoid membrane. It carries out the reaction 2 oxidized [plastocyanin] + a plastoquinol + 2 H(+)(in) = 2 reduced [plastocyanin] + a plastoquinone + 4 H(+)(out). Its function is as follows. Component of the cytochrome b6-f complex, which mediates electron transfer between photosystem II (PSII) and photosystem I (PSI), cyclic electron flow around PSI, and state transitions. This chain is Cytochrome b6-f complex iron-sulfur subunit, found in Synechococcus sp. (strain JA-3-3Ab) (Cyanobacteria bacterium Yellowstone A-Prime).